The chain runs to 446 residues: Adenylosuccinate synthetase (446 aa).

GTP-binding positions include 20–26 (GDEGKGK) and 48–50 (GHT). Residue Asp21 is the Proton acceptor of the active site. Mg(2+) contacts are provided by Asp21 and Gly48. IMP contacts are provided by residues 21-24 (DEGK), 46-49 (NAGH), Thr137, Arg151, Gln232, Thr247, and Arg319. His49 acts as the Proton donor in catalysis. 315 to 321 (SVTGRPR) contacts substrate. GTP contacts are provided by residues Arg321, 347–349 (KLD), and 429–431 (STG).

Belongs to the adenylosuccinate synthetase family. In terms of assembly, homodimer. Requires Mg(2+) as cofactor.

The protein resides in the cytoplasm. It catalyses the reaction IMP + L-aspartate + GTP = N(6)-(1,2-dicarboxyethyl)-AMP + GDP + phosphate + 2 H(+). The protein operates within purine metabolism; AMP biosynthesis via de novo pathway; AMP from IMP: step 1/2. Plays an important role in the de novo pathway of purine nucleotide biosynthesis. Catalyzes the first committed step in the biosynthesis of AMP from IMP. The sequence is that of Adenylosuccinate synthetase from Polynucleobacter asymbioticus (strain DSM 18221 / CIP 109841 / QLW-P1DMWA-1) (Polynucleobacter necessarius subsp. asymbioticus).